We begin with the raw amino-acid sequence, 131 residues long: C-glycoside deglycosidase beta subunit (131 aa).

This sequence belongs to the C-glycoside deglycosidase beta subunit family. As to quaternary structure, heterodimer composed of an alpha subunit (CarB1) and a beta subunit (CarC1). Requires Mg(2+) as cofactor.

It catalyses the reaction 3''-dehydroisovitexin = 1,5-anhydro-D-erythro-hex-1-en-3-ulose + apigenin. Its activity is regulated as follows. Activity is strongly reduced in the presence of chelating agents. Functionally, carbon-carbon bond-cleaving enzyme which participates in the metabolism of C-glycosides. Acts on the C6-glycosylated compound 3''-dehydroisovitexin (3''-oxo-isovitexin). Shows weak activity with 3''-dehydroisoorientin (3''-oxo-homoorientin) and 3'-dehydromangiferin (3'-oxo-mangiferin). The polypeptide is C-glycoside deglycosidase beta subunit (Arthrobacter globiformis (strain ATCC 8010 / DSM 20124 / JCM 1332 / NBRC 12137 / NCIMB 8907 / NRRL B-2979 / 168)).